The sequence spans 319 residues: Annexin A5 (319 aa).

An N-acetylalanine modification is found at Ala2. Annexin repeat units lie at residues 13–84, 85–156, 168–240, and 244–315; these read FDGR…ALMK, PSRL…VLLQ, AQVE…AVVK, and SIPA…LLCG. Lys27 is covalently cross-linked (Glycyl lysine isopeptide (Lys-Gly) (interchain with G-Cter in SUMO1); alternate). A Glycyl lysine isopeptide (Lys-Gly) (interchain with G-Cter in SUMO2); alternate cross-link involves residue Lys27. Ser35 bears the Phosphoserine mark. N6-acetyllysine occurs at positions 68, 74, 77, 95, and 99. At Lys288 the chain carries N6-succinyllysine. The [IL]-x-C-x-x-[DE] motif signature appears at 312-318; sequence LLCGGED.

Belongs to the annexin family. Monomer. Binds ATRX, EIF5B and DNMT1. In terms of processing, S-nitrosylation is induced by interferon-gamma and oxidatively-modified low-densitity lipoprotein (LDL(ox)) possibly implicating the iNOS-S100A8/9 transnitrosylase complex.

Functionally, this protein is an anticoagulant protein that acts as an indirect inhibitor of the thromboplastin-specific complex, which is involved in the blood coagulation cascade. This Rattus norvegicus (Rat) protein is Annexin A5 (Anxa5).